The sequence spans 128 residues: MPKKIIVPVGTSKPIAPFSPGTLADGVVYVSGTLPFDKDNNVVHVGDASAQTRHVLETIKSVIETAGGTMEDVTMNHIFITDWANYQAVNTVYAEYFPGDKPARYCIQCGLVKPDALVEIATVAHIGK.

This sequence belongs to the RutC family.

The catalysed reaction is (Z)-3-aminoacrylate + H2O + H(+) = 3-oxopropanoate + NH4(+). Involved in pyrimidine catabolism. Catalyzes the deamination of 3-aminoacrylate to malonic semialdehyde, a reaction that can also occur spontaneously. RutC may facilitate the reaction and modulate the metabolic fitness, rather than catalyzing essential functions. The sequence is that of 3-aminoacrylate deaminase RutC from Agrobacterium fabrum (strain C58 / ATCC 33970) (Agrobacterium tumefaciens (strain C58)).